Here is a 638-residue protein sequence, read N- to C-terminus: 1-deoxy-D-xylulose-5-phosphate synthase (638 aa).

Residues H79 and 120–122 (GHS) each bind thiamine diphosphate. D151 contacts Mg(2+). Thiamine diphosphate is bound by residues 152–153 (GA), N182, Y291, and E373. N182 is a binding site for Mg(2+).

This sequence belongs to the transketolase family. DXPS subfamily. In terms of assembly, homodimer. Mg(2+) is required as a cofactor. Requires thiamine diphosphate as cofactor.

It catalyses the reaction D-glyceraldehyde 3-phosphate + pyruvate + H(+) = 1-deoxy-D-xylulose 5-phosphate + CO2. The protein operates within metabolic intermediate biosynthesis; 1-deoxy-D-xylulose 5-phosphate biosynthesis; 1-deoxy-D-xylulose 5-phosphate from D-glyceraldehyde 3-phosphate and pyruvate: step 1/1. In terms of biological role, catalyzes the acyloin condensation reaction between C atoms 2 and 3 of pyruvate and glyceraldehyde 3-phosphate to yield 1-deoxy-D-xylulose-5-phosphate (DXP). This chain is 1-deoxy-D-xylulose-5-phosphate synthase, found in Xanthomonas oryzae pv. oryzae (strain MAFF 311018).